Here is a 372-residue protein sequence, read N- to C-terminus: Glutamate 5-kinase (372 aa).

Lys14 is a binding site for ATP. Residues Ser54, Asp141, and Asn153 each contribute to the substrate site. Thr173–Asp174 provides a ligand contact to ATP. In terms of domain architecture, PUA spans Arg280–Leu358.

It belongs to the glutamate 5-kinase family.

It is found in the cytoplasm. It catalyses the reaction L-glutamate + ATP = L-glutamyl 5-phosphate + ADP. Its pathway is amino-acid biosynthesis; L-proline biosynthesis; L-glutamate 5-semialdehyde from L-glutamate: step 1/2. In terms of biological role, catalyzes the transfer of a phosphate group to glutamate to form L-glutamate 5-phosphate. In Cupriavidus metallidurans (strain ATCC 43123 / DSM 2839 / NBRC 102507 / CH34) (Ralstonia metallidurans), this protein is Glutamate 5-kinase.